A 1427-amino-acid polypeptide reads, in one-letter code: DNA-directed RNA polymerase subunit beta' (1427 aa).

The Zn(2+) site is built by cysteine 70, cysteine 72, cysteine 85, and cysteine 88. Aspartate 461, aspartate 463, and aspartate 465 together coordinate Mg(2+). Zn(2+) is bound by residues cysteine 810, cysteine 884, cysteine 891, and cysteine 894. Disordered regions lie at residues glutamine 1044–glycine 1065 and proline 1394–alanine 1427.

This sequence belongs to the RNA polymerase beta' chain family. In terms of assembly, the RNAP catalytic core consists of 2 alpha, 1 beta, 1 beta' and 1 omega subunit. When a sigma factor is associated with the core the holoenzyme is formed, which can initiate transcription. It depends on Mg(2+) as a cofactor. The cofactor is Zn(2+).

The enzyme catalyses RNA(n) + a ribonucleoside 5'-triphosphate = RNA(n+1) + diphosphate. DNA-dependent RNA polymerase catalyzes the transcription of DNA into RNA using the four ribonucleoside triphosphates as substrates. The sequence is that of DNA-directed RNA polymerase subunit beta' from Novosphingobium aromaticivorans (strain ATCC 700278 / DSM 12444 / CCUG 56034 / CIP 105152 / NBRC 16084 / F199).